A 443-amino-acid polypeptide reads, in one-letter code: Chromosome partition protein MukF (443 aa).

The leucine-zipper stretch occupies residues 209 to 237 (LDETSINLRELQDTLNAAGDKLQSQLLRI).

The protein belongs to the MukF family. In terms of assembly, interacts, and probably forms a ternary complex, with MukE and MukB via its C-terminal region. The complex formation is stimulated by calcium or magnesium. It is required for an interaction between MukE and MukB.

The protein localises to the cytoplasm. It is found in the nucleoid. In terms of biological role, involved in chromosome condensation, segregation and cell cycle progression. May participate in facilitating chromosome segregation by condensation DNA from both sides of a centrally located replisome during cell division. Not required for mini-F plasmid partitioning. Probably acts via its interaction with MukB and MukE. Overexpression results in anucleate cells. It has a calcium binding activity. The sequence is that of Chromosome partition protein MukF from Haemophilus ducreyi (strain 35000HP / ATCC 700724).